A 116-amino-acid polypeptide reads, in one-letter code: MAGRSGDSDENLLKAIRLIKFLYQSNPPPSPEGTRQARRNRRRRWRARQRQIHSIGERIICTFLGRPEEPVPLQLPPLERLNLNCSEDCGTSGTQGVGSPQIPVEPPAVLESGTEE.

Phosphoserine; by host CK2 is present on residues serine 5 and serine 8. A homomultimerization region spans residues 18-26; sequence LIKFLYQSN. A disordered region spans residues 23–48; that stretch reads YQSNPPPSPEGTRQARRNRRRRWRAR. The Nuclear localization signal and RNA-binding (RRE) motif lies at 34 to 50; that stretch reads TRQARRNRRRRWRARQR. The span at 36–48 shows a compositional bias: basic residues; that stretch reads QARRNRRRRWRAR. The short motif at 73-84 is the Nuclear export signal and binding to XPO1 element; that stretch reads LQLPPLERLNLN. The disordered stretch occupies residues 90 to 116; sequence GTSGTQGVGSPQIPVEPPAVLESGTEE. 2 positions are modified to phosphoserine; by host: serine 92 and serine 99.

It belongs to the HIV-1 REV protein family. As to quaternary structure, homomultimer; when bound to the RRE. Multimeric assembly is essential for activity and may involve XPO1. Binds to human KPNB1, XPO1, TNPO1, RANBP5 and IPO7. Interacts with the viral Integrase. Interacts with human KHDRBS1. Interacts with human NAP1; this interaction decreases Rev multimerization and stimulates its activity. Interacts with human DEAD-box helicases DDX3 and DDX24; these interactions may serve for viral RNA export to the cytoplasm and packaging, respectively. Interacts with human PSIP1; this interaction may inhibit HIV-1 DNA integration by promoting dissociation of the Integrase-LEDGF/p75 complex. Post-translationally, asymmetrically arginine dimethylated at one site by host PRMT6. Methylation impairs the RNA-binding activity and export of viral RNA from the nucleus to the cytoplasm. Phosphorylated by protein kinase CK2. Presence of, and maybe binding to the N-terminus of the regulatory beta subunit of CK2 is necessary for CK2-mediated Rev's phosphorylation.

It localises to the host nucleus. It is found in the host nucleolus. Its subcellular location is the host cytoplasm. Its function is as follows. Escorts unspliced or incompletely spliced viral pre-mRNAs (late transcripts) out of the nucleus of infected cells. These pre-mRNAs carry a recognition sequence called Rev responsive element (RRE) located in the env gene, that is not present in fully spliced viral mRNAs (early transcripts). This function is essential since most viral proteins are translated from unspliced or partially spliced pre-mRNAs which cannot exit the nucleus by the pathway used by fully processed cellular mRNAs. Rev itself is translated from a fully spliced mRNA that readily exits the nucleus. Rev's nuclear localization signal (NLS) binds directly to KPNB1/Importin beta-1 without previous binding to KPNA1/Importin alpha-1. KPNB1 binds to the GDP bound form of RAN (Ran-GDP) and targets Rev to the nucleus. In the nucleus, the conversion from Ran-GDP to Ran-GTP dissociates Rev from KPNB1 and allows Rev's binding to the RRE in viral pre-mRNAs. Rev multimerization on the RRE via cooperative assembly exposes its nuclear export signal (NES) to the surface. Rev can then form a complex with XPO1/CRM1 and Ran-GTP, leading to nuclear export of the complex. Conversion from Ran-GTP to Ran-GDP mediates dissociation of the Rev/RRE/XPO1/RAN complex, so that Rev can return to the nucleus for a subsequent round of export. Beside KPNB1, also seems to interact with TNPO1/Transportin-1, RANBP5/IPO5 and IPO7/RANBP7 for nuclear import. The nucleoporin-like HRB/RIP is an essential cofactor that probably indirectly interacts with Rev to release HIV RNAs from the perinuclear region to the cytoplasm. The protein is Protein Rev of Homo sapiens (Human).